Here is a 347-residue protein sequence, read N- to C-terminus: MDDNKKKALAAALGQIEKQFGKGSIMKLGDNRTMDVETVSTGSLSLDIALGAGGLPMGRIVEIYGPESSGKTTLTLEVIAQAQKAGKTCAFIDAEHALDPIYAQKLGVDIDQLLCSQPDTGEQALEIVDALARSGAVDLIVVDSVAALTPKAEIEGEMGDSHMGLQARMLSQAMRKLTGNLKQSNCMCIFINQIRMKIGVMFGNPETTTGGNALKFYASVRLDIRRTGAVKDGDEVVGNETRIKVVKNKIAAPFKQAETQILYGKGFNREGELIDLGVKHKLVDKAGAWYSYNGDKIGQGKANASKFMRENPEIGAELDKKLREMLLTPTEDKPEVVEKIEEENEEF.

65–72 (GPESSGKT) lines the ATP pocket.

The protein belongs to the RecA family.

The protein resides in the cytoplasm. Its function is as follows. Can catalyze the hydrolysis of ATP in the presence of single-stranded DNA, the ATP-dependent uptake of single-stranded DNA by duplex DNA, and the ATP-dependent hybridization of homologous single-stranded DNAs. It interacts with LexA causing its activation and leading to its autocatalytic cleavage. This is Protein RecA from Aliivibrio salmonicida (strain LFI1238) (Vibrio salmonicida (strain LFI1238)).